A 374-amino-acid chain; its full sequence is Chaperone protein DnaJ (374 aa).

Residues 5–70 (DYYEVLGVNL…RKRASYDQFG (66 aa)) enclose the J domain. The CR-type zinc-finger motif lies at 133–210 (GLSRTIKVPT…CHGQGRQQQT (78 aa)). Positions 146, 149, 162, 165, 184, 187, 198, and 201 each coordinate Zn(2+). 4 CXXCXGXG motif repeats span residues 146–153 (CKTCNGSG), 162–169 (CPRCNGSG), 184–191 (CSVCRGRG), and 198–205 (CTDCHGQG).

Belongs to the DnaJ family. As to quaternary structure, homodimer. Zn(2+) is required as a cofactor.

The protein resides in the cytoplasm. In terms of biological role, participates actively in the response to hyperosmotic and heat shock by preventing the aggregation of stress-denatured proteins and by disaggregating proteins, also in an autonomous, DnaK-independent fashion. Unfolded proteins bind initially to DnaJ; upon interaction with the DnaJ-bound protein, DnaK hydrolyzes its bound ATP, resulting in the formation of a stable complex. GrpE releases ADP from DnaK; ATP binding to DnaK triggers the release of the substrate protein, thus completing the reaction cycle. Several rounds of ATP-dependent interactions between DnaJ, DnaK and GrpE are required for fully efficient folding. Also involved, together with DnaK and GrpE, in the DNA replication of plasmids through activation of initiation proteins. In Coxiella burnetii (strain RSA 331 / Henzerling II), this protein is Chaperone protein DnaJ.